The sequence spans 249 residues: Segregation and condensation protein A (249 aa).

Belongs to the ScpA family. Component of a cohesin-like complex composed of ScpA, ScpB and the Smc homodimer, in which ScpA and ScpB bind to the head domain of Smc. The presence of the three proteins is required for the association of the complex with DNA.

It localises to the cytoplasm. In terms of biological role, participates in chromosomal partition during cell division. May act via the formation of a condensin-like complex containing Smc and ScpB that pull DNA away from mid-cell into both cell halves. The polypeptide is Segregation and condensation protein A (Clostridium acetobutylicum (strain ATCC 824 / DSM 792 / JCM 1419 / IAM 19013 / LMG 5710 / NBRC 13948 / NRRL B-527 / VKM B-1787 / 2291 / W)).